Here is a 328-residue protein sequence, read N- to C-terminus: Beta-ketoacyl-[acyl-carrier-protein] synthase III (328 aa).

Active-site residues include cysteine 122 and histidine 255. Residues 256–260 (QANVR) are ACP-binding. The active site involves asparagine 285.

It belongs to the thiolase-like superfamily. FabH family. Homodimer.

The protein resides in the cytoplasm. The catalysed reaction is malonyl-[ACP] + acetyl-CoA + H(+) = 3-oxobutanoyl-[ACP] + CO2 + CoA. Its pathway is lipid metabolism; fatty acid biosynthesis. In terms of biological role, catalyzes the condensation reaction of fatty acid synthesis by the addition to an acyl acceptor of two carbons from malonyl-ACP. Catalyzes the first condensation reaction which initiates fatty acid synthesis and may therefore play a role in governing the total rate of fatty acid production. Possesses both acetoacetyl-ACP synthase and acetyl transacylase activities. Its substrate specificity determines the biosynthesis of branched-chain and/or straight-chain of fatty acids. This chain is Beta-ketoacyl-[acyl-carrier-protein] synthase III, found in Bordetella petrii (strain ATCC BAA-461 / DSM 12804 / CCUG 43448).